The primary structure comprises 314 residues: MTEPLRIVFAGTPEFAAEHLKALLDSPYQIVAVYTQPDRPAGRGQKLMPSPVKQLALQHEIPVMQPPTLRAPEAQAELAALKPDLMVVVAYGLILPQVVLDIPRLGCINSHASLLPRWRGAAPIQRAVQAGDAESGVTVMQMEAGLDTGPMLLKAVTPITAQDTGGTLHDRLAELGPPAVLQAIAGLADGSLVGEVQDDSLANYAHKLNKDEARLDWTRPADELERLIRAFNPWPICHSTLNEETLKVLAADLAEGQGVPGTVLSASKDGLIVACGQNALRLTRLQLPGGKPLNFADLFNSRREKFAIGTVLGQ.

Position 113–116 (113–116) interacts with (6S)-5,6,7,8-tetrahydrofolate; sequence SLLP.

The protein belongs to the Fmt family.

The catalysed reaction is L-methionyl-tRNA(fMet) + (6R)-10-formyltetrahydrofolate = N-formyl-L-methionyl-tRNA(fMet) + (6S)-5,6,7,8-tetrahydrofolate + H(+). Attaches a formyl group to the free amino group of methionyl-tRNA(fMet). The formyl group appears to play a dual role in the initiator identity of N-formylmethionyl-tRNA by promoting its recognition by IF2 and preventing the misappropriation of this tRNA by the elongation apparatus. The chain is Methionyl-tRNA formyltransferase from Pseudomonas savastanoi pv. phaseolicola (strain 1448A / Race 6) (Pseudomonas syringae pv. phaseolicola (strain 1448A / Race 6)).